The following is a 333-amino-acid chain: UPF0285 protein MTH_1441 (333 aa).

The protein belongs to the UPF0285 family.

This chain is UPF0285 protein MTH_1441, found in Methanothermobacter thermautotrophicus (strain ATCC 29096 / DSM 1053 / JCM 10044 / NBRC 100330 / Delta H) (Methanobacterium thermoautotrophicum).